The primary structure comprises 522 residues: Putative E3 ubiquitin-protein ligase RING1a (522 aa).

Residues 1-10 (MSVKNNSFSS) show a composition bias toward polar residues. The interval 1–119 (MSVKNNSFSS…RSPSSISGDQ (119 aa)) is disordered. Residues 32 to 64 (LQEKDETKEEKEGDEEVKHDEAEEDQEVVKPND) are compositionally biased toward basic and acidic residues. Residues 65–106 (AEEDDDGDDAEEDEEEEVEAEEDEEAEEEEEEEEEEEEEEED) are compositionally biased toward acidic residues. The segment at 136 to 176 (CPICLGIIKKTRTVMECLHRFCRECIDKSMRLGNNECPACR) adopts an RING-type zinc-finger fold. Disordered stretches follow at residues 250–347 (VLMR…DTKG) and 363–385 (RGGT…KSVR). Residues 287–306 (NNNRGRDKDSSSDERGTEVR) show a composition bias toward basic and acidic residues. Low complexity predominate over residues 316–325 (SRSTQHPSSS). Polar residues-rich tracts occupy residues 326 to 336 (GANKNNGNCAD) and 366 to 384 (TRSN…SKSV).

In terms of assembly, homodimer or heterodimer with RING1B. Interacts with CLF. Component of the PRC1-like complex, at least composed of RING1A, RING1B and LHP1.

It is found in the nucleus. It carries out the reaction S-ubiquitinyl-[E2 ubiquitin-conjugating enzyme]-L-cysteine + [acceptor protein]-L-lysine = [E2 ubiquitin-conjugating enzyme]-L-cysteine + N(6)-ubiquitinyl-[acceptor protein]-L-lysine.. Its pathway is protein modification; protein ubiquitination. Its function is as follows. Putative E3 ubiquitin-protein ligase that mediates monoubiquitination of 'Lys-119' of histone H2A (H2AK119ub), thereby playing a central role in histone code and gene regulation. Functionally, as part of the PRC1-like complex, repress class I KNOX gene expression. PcG PRC1 complex maintains the transcriptionally repressive state of many genes, including Hox genes, throughout development. PcG PRC1 complex acts via chromatin remodeling and modification of histones, rendering chromatin heritably changed in its expressibility. This chain is Putative E3 ubiquitin-protein ligase RING1a (RING1A), found in Arabidopsis thaliana (Mouse-ear cress).